The primary structure comprises 114 residues: MVISRAEIYWADLGPPSGSQPAKRRPVLVIQSDPYNASRLATVIAAVITSNTALAAMPGNVFLPATTTRLPRDSVVNVTAIVTLNKTDLTDRVGEVPASLMHEVDRGLRRVLDL.

It belongs to the PemK/MazF family. In terms of assembly, probably forms a complex with cognate antitoxin MazE2.

In terms of biological role, toxic component of a type II toxin-antitoxin (TA) system. Acts as an endoribonuclease on single-strand RNA, cleaving between the second and third bases in the sequences CUCCU and UUCCU. Neutralized by coexpression with cognate antitoxin MazE2. In Mycobacterium bovis (strain ATCC BAA-935 / AF2122/97), this protein is Endoribonuclease MazF2 (mazF2).